We begin with the raw amino-acid sequence, 321 residues long: D-alanine--D-alanine ligase (321 aa).

In terms of domain architecture, ATP-grasp spans 121 to 315 (RSWFLTNNIN…FVNLIEEILK (195 aa)). 148 to 199 (IKRPYVIKPFTQGSSIGVEVIFEEDDFNFANYDFPYGDEVIIEKYIKGRELQ) is a binding site for ATP. Residues glutamate 268, glutamate 282, and asparagine 284 each coordinate Mg(2+).

This sequence belongs to the D-alanine--D-alanine ligase family. Mg(2+) serves as cofactor. Requires Mn(2+) as cofactor.

It localises to the cytoplasm. It catalyses the reaction 2 D-alanine + ATP = D-alanyl-D-alanine + ADP + phosphate + H(+). It participates in cell wall biogenesis; peptidoglycan biosynthesis. Functionally, cell wall formation. The sequence is that of D-alanine--D-alanine ligase from Rickettsia bellii (strain OSU 85-389).